Consider the following 241-residue polypeptide: DnaJ homolog subfamily C member 4 (241 aa).

The J domain maps to 34–99 (TYYELLGVHP…QSRRSYDDQL (66 aa)). Positions 88-99 (REQSRRSYDDQL) are enriched in basic and acidic residues. The segment at 88–129 (REQSRRSYDDQLRSGSPPKSPRTTVHDKSAHQTHSSWTPPNA) is disordered. Residues 119–129 (QTHSSWTPPNA) show a composition bias toward polar residues. Residues 156–175 (VLGYCLLLMLAGMGLHYIAF) traverse the membrane as a helical segment. The interval 212 to 241 (QQERQRLGQRQPPPSEPTQGPEIVPRGAGP) is disordered.

It localises to the membrane. In Homo sapiens (Human), this protein is DnaJ homolog subfamily C member 4 (DNAJC4).